We begin with the raw amino-acid sequence, 824 residues long: Leucine--tRNA ligase (824 aa).

The short motif at 42-52 (PYPSGRIHMGH) is the 'HIGH' region element. The short motif at 581-585 (KMSKS) is the 'KMSKS' region element. Lys584 contributes to the ATP binding site.

Belongs to the class-I aminoacyl-tRNA synthetase family.

The protein resides in the cytoplasm. It catalyses the reaction tRNA(Leu) + L-leucine + ATP = L-leucyl-tRNA(Leu) + AMP + diphosphate. This chain is Leucine--tRNA ligase, found in Geotalea daltonii (strain DSM 22248 / JCM 15807 / FRC-32) (Geobacter daltonii).